Reading from the N-terminus, the 37-residue chain is Large ribosomal subunit protein bL36c (37 aa).

The protein belongs to the bacterial ribosomal protein bL36 family.

It is found in the plastid. The protein resides in the chloroplast. In Pleurastrum terricola (Filamentous green alga), this protein is Large ribosomal subunit protein bL36c.